The following is a 156-amino-acid chain: Small ribosomal subunit protein uS7 (156 aa).

It belongs to the universal ribosomal protein uS7 family. Part of the 30S ribosomal subunit. Contacts proteins S9 and S11.

One of the primary rRNA binding proteins, it binds directly to 16S rRNA where it nucleates assembly of the head domain of the 30S subunit. Is located at the subunit interface close to the decoding center, probably blocks exit of the E-site tRNA. The polypeptide is Small ribosomal subunit protein uS7 (Rhodospirillum centenum (strain ATCC 51521 / SW)).